The sequence spans 529 residues: MKAIWHGGFIYTMLEEGDRTEAVYVEDGVIKGTGSYERLKEKYGSPETEEISLNGAVMFPGFVDSHLHLIGHGEKQLQLDLSALTSKDSILQAAKERERQLPKNDWLIGEGWNENQFETPDYLTKHDLDRLFPDRPVLLKRICRHAIAVNSAALQAAGISRNTPDPDGGVIVKDANGEPTGLLFDKAQDLILKAVPPVSQHYVDEALTAAIKDCWTKGLTGGHSEDLSYYGDVSVPMKAYEKAAAGGKYPFRCHLLVHHEAVDRWEQLEKLSGPYVEFGAMKIFADGALGGRTALLKEPYQDDPSTNGVQVHDDETLGRLIRKAREKGMEVAVHAIGDLAFEKVLNAIEKHPPKNGRHDRLIHAQVLDNELIERAARMPIALDLQPHFVASDFPWVIDRLGKDRMKTAFAWKTLISKGILCAGGSDAPIEPVDPLLGIQSAVLRKSSHEQNGPSYNESECLPVYEAIKLYTEGSAGIIYKEKSRGKIAEGYDADFTVLSGDPFAIDPAQLHLLEIKKTVINGQIVYEKS.

This sequence belongs to the metallo-dependent hydrolases superfamily.

This chain is Putative amidohydrolase YtcJ (ytcJ), found in Bacillus subtilis (strain 168).